A 107-amino-acid chain; its full sequence is U1-lycotoxin-Ls1e (107 aa).

Residues Met-1–Ser-20 form the signal peptide. A propeptide spanning residues Glu-21–Arg-41 is cleaved from the precursor. Intrachain disulfides connect Cys-44/Cys-59, Cys-51/Cys-68, Cys-58/Cys-86, and Cys-70/Cys-84.

The protein belongs to the neurotoxin 19 (CSTX) family. 04 (U1-Lctx) subfamily. Expressed by the venom gland.

The protein resides in the secreted. The polypeptide is U1-lycotoxin-Ls1e (Lycosa singoriensis (Wolf spider)).